The sequence spans 81 residues: Cytotoxin I-like P-15 (81 aa).

An N-terminal signal peptide occupies residues 1-21 (MKTLLLTLAAATIVCLDLGYT). 4 disulfides stabilise this stretch: cysteine 24–cysteine 42, cysteine 35–cysteine 59, cysteine 63–cysteine 74, and cysteine 75–cysteine 80.

This sequence belongs to the three-finger toxin family. Short-chain subfamily. Type IA cytotoxin sub-subfamily. Monomer in solution; Homodimer and oligomer in the presence of negatively charged lipids forming a pore with a size ranging between 20 and 30 Angstroms. In terms of tissue distribution, expressed by the venom gland.

The protein resides in the secreted. It localises to the target cell membrane. In terms of biological role, shows cytolytic activity on many different cells by forming pore in lipid membranes. In vivo, increases heart rate or kills the animal by cardiac arrest. In addition, it binds to heparin with high affinity, interacts with Kv channel-interacting protein 1 (KCNIP1) in a calcium-independent manner, and binds to integrin alpha-V/beta-3 (ITGAV/ITGB3) with moderate affinity. This is Cytotoxin I-like P-15 from Naja atra (Chinese cobra).